The sequence spans 177 residues: 18.9 kDa heat shock protein (177 aa).

The interval 1–35 is disordered; the sequence is MSMITSMLGRKQNAQQKGGGGGGRTGGGGGGEIEP. Over residues 17–32 the composition is skewed to gly residues; that stretch reads KGGGGGGRTGGGGGGE. Positions 63–177 constitute a sHSP domain; sequence AAGVPSTASM…PHARIIPITN (115 aa).

Belongs to the small heat shock protein (HSP20) family. May form oligomeric structures.

It localises to the cytoplasm. This chain is 18.9 kDa heat shock protein (HSP18.9), found in Oryza sativa subsp. japonica (Rice).